Reading from the N-terminus, the 135-residue chain is DNA-binding protein inhibitor ID-2-B (135 aa).

Positions alanine 23 to leucine 75 constitute a bHLH domain. A Nuclear export signal motif is present at residues leucine 108–leucine 117.

In terms of assembly, heterodimer with other HLH proteins.

The protein resides in the cytoplasm. The protein localises to the nucleus. Transcriptional regulator (lacking a basic DNA binding domain) which negatively regulates the basic helix-loop-helix (bHLH) transcription factors by forming heterodimers and inhibiting their DNA binding and transcriptional activity. Inhibits the activity of both neurogenic (neurod1/neuroD) and myogenic (myod1/myoD) bHLH factors. May play a role in the regulation of the circadian clock. The polypeptide is DNA-binding protein inhibitor ID-2-B (id2-b) (Xenopus laevis (African clawed frog)).